Consider the following 210-residue polypeptide: Probable GTP-binding protein EngB (210 aa).

An EngB-type G domain is found at 25-199 (TGIEVAFAGR…RQKLDTWFNE (175 aa)). Residues 33–40 (GRSNAGKS), 60–64 (GRTQL), 78–81 (DLPG), 145–148 (TKAD), and 178–180 (FSS) each bind GTP. Residues Ser-40 and Thr-62 each coordinate Mg(2+).

It belongs to the TRAFAC class TrmE-Era-EngA-EngB-Septin-like GTPase superfamily. EngB GTPase family. The cofactor is Mg(2+).

Necessary for normal cell division and for the maintenance of normal septation. The chain is Probable GTP-binding protein EngB from Escherichia coli O157:H7.